The primary structure comprises 563 residues: Pyruvate decarboxylase (563 aa).

Positions 28 and 115 each coordinate pyruvate. Residues T390 and 413-415 contribute to the thiamine diphosphate site; that span reads GSI. Position 444 (D444) interacts with Mg(2+). Residues 445-446 and 471-476 contribute to the thiamine diphosphate site; these read GS and NDGYTI. Mg(2+) contacts are provided by N471 and G473. Pyruvate is bound at residue E477.

The protein belongs to the TPP enzyme family. In terms of assembly, homotetramer. It depends on Mg(2+) as a cofactor. Requires thiamine diphosphate as cofactor.

The catalysed reaction is a 2-oxocarboxylate + H(+) = an aldehyde + CO2. It carries out the reaction pyruvate + H(+) = acetaldehyde + CO2. This chain is Pyruvate decarboxylase (PDC1), found in Kluyveromyces lactis (strain ATCC 8585 / CBS 2359 / DSM 70799 / NBRC 1267 / NRRL Y-1140 / WM37) (Yeast).